The following is a 321-amino-acid chain: L-Ala-D/L-Glu epimerase (321 aa).

2 residues coordinate substrate: threonine 124 and lysine 149. Lysine 151 functions as the Proton acceptor; specific for (R)-substrate epimerization in the catalytic mechanism. Aspartate 176, glutamate 202, and aspartate 225 together coordinate Mg(2+). The active-site Proton acceptor; specific for (S)-substrate epimerization is the lysine 247. Substrate-binding residues include cysteine 275, aspartate 297, and aspartate 299.

It belongs to the mandelate racemase/muconate lactonizing enzyme family. As to quaternary structure, monomer. Mg(2+) is required as a cofactor.

The enzyme catalyses L-alanyl-L-glutamate = L-alanyl-D-glutamate. It participates in cell wall biogenesis; peptidoglycan recycling. Its function is as follows. Catalyzes the epimerization of L-Ala-D-Glu to L-Ala-L-Glu and has a role in the recycling of the murein peptide, of which L-Ala-D-Glu is a component. Is also able to catalyze the reverse reaction and the epimerization of all the L-Ala-X dipeptides, except L-Ala-L-Arg, L-Ala-L-Lys and L-Ala-L-Pro. Is also active with L-Gly-L-Glu, L-Phe-L-Glu, and L-Ser-L-Glu, but not with L-Glu-L-Glu, L-Lys-L-Glu, L-Pro-L-Glu, L-Lys-L-Ala, or D-Ala-D-Ala. The sequence is that of L-Ala-D/L-Glu epimerase (ycjG) from Escherichia coli (strain K12).